The sequence spans 155 residues: Transcriptional repressor NrdR (155 aa).

The segment at 3–34 (CPFCSHFESKVVDSRPTDEGQAIRRRRECVSC) is a zinc-finger region. An ATP-cone domain is found at 49–139 (LIVVKKSGNR…VYREFKDINT (91 aa)).

The protein belongs to the NrdR family. Requires Zn(2+) as cofactor.

Negatively regulates transcription of bacterial ribonucleotide reductase nrd genes and operons by binding to NrdR-boxes. The protein is Transcriptional repressor NrdR of Alkaliphilus metalliredigens (strain QYMF).